The primary structure comprises 104 residues: Large ribosomal subunit protein uL24 (104 aa).

Belongs to the universal ribosomal protein uL24 family. In terms of assembly, part of the 50S ribosomal subunit.

Functionally, one of two assembly initiator proteins, it binds directly to the 5'-end of the 23S rRNA, where it nucleates assembly of the 50S subunit. One of the proteins that surrounds the polypeptide exit tunnel on the outside of the subunit. The chain is Large ribosomal subunit protein uL24 from Rhodopseudomonas palustris (strain BisB5).